The primary structure comprises 297 residues: Cytidine deaminase (297 aa).

CMP/dCMP-type deaminase domains follow at residues 54-174 (SSVE…FGPK) and 192-297 (LRGD…YIEV). Residue 95-97 (NQE) coordinates substrate. Position 108 (H108) interacts with Zn(2+). E110 (proton donor) is an active-site residue. Zn(2+)-binding residues include C135 and C138.

This sequence belongs to the cytidine and deoxycytidylate deaminase family. Homodimer. Zn(2+) is required as a cofactor.

The catalysed reaction is cytidine + H2O + H(+) = uridine + NH4(+). It carries out the reaction 2'-deoxycytidine + H2O + H(+) = 2'-deoxyuridine + NH4(+). This enzyme scavenges exogenous and endogenous cytidine and 2'-deoxycytidine for UMP synthesis. In Actinobacillus pleuropneumoniae serotype 5b (strain L20), this protein is Cytidine deaminase.